Consider the following 365-residue polypeptide: Phosphatidylcholine:ceramide cholinephosphotransferase 4 (365 aa).

Over 1–44 (MISYPFFSLSPPGLVPPPMAVPPVEMYSGSFWNRMRKPLPLRTQ) the chain is Cytoplasmic. The helical transmembrane segment at 45-65 (VIRFTVVFVIVSFILAVALQI) threads the bilayer. The Lumenal segment spans residues 66–92 (THERMPDPKVTKPLPDLGFELLTKVPG). A helical transmembrane segment spans residues 93–113 (MYVLADCCIGFLNILSVFTAF). The Cytoplasmic segment spans residues 114–165 (KLYLLHRHCVGSGEPELPCNIPGVSRFFLSVWLCKENCRIELRNVHTIAWIR). A helical transmembrane segment spans residues 166–186 (FITSYALLLLFRSVVIVMTSL). Residues 187-229 (PAPDDLCQDPPKIENPVKNVILTVLTAGGGSIHCGDLMYSGHT) lie on the Lumenal side of the membrane. The active site involves histidine 228. A helical membrane pass occupies residues 230–250 (VILTLHLMFHWIYGAMVHWSF). A topological domain (cytoplasmic) is located at residue arginine 251. A helical membrane pass occupies residues 252–272 (PVVTVVAIFGYYCIVASRFHY). Catalysis depends on residues histidine 271 and aspartate 275. Residues 273-275 (TDD) lie on the Lumenal side of the membrane. Residues 276–296 (VLVAIYLTIATFIAVGHNADG) form a helical membrane-spanning segment. The Cytoplasmic segment spans residues 297–365 (APWQLQLFIR…ALMFKCGAYV (69 aa)).

It belongs to the sphingomyelin synthase family.

It localises to the golgi apparatus membrane. It catalyses the reaction an N-acylsphing-4-enine + a 1,2-diacyl-sn-glycero-3-phosphocholine = a sphingomyelin + a 1,2-diacyl-sn-glycerol. Bidirectional lipid cholinephosphotransferase capable of converting phosphatidylcholine (PC) and ceramide to sphingomyelin (SM) and diacylglycerol (DAG) and vice versa. Direction is dependent on the relative concentrations of DAG and ceramide as phosphocholine acceptors. Directly and specifically recognizes the choline head group on the substrate. Also requires two fatty chains on the choline-P donor molecule in order to be recognized efficiently as a substrate. Does not function strictly as a SM synthase. Essential for viability of the pathogenic bloodstream stage of this human protozoan parasite and, consequently, can be considered as potential drug target. This is Phosphatidylcholine:ceramide cholinephosphotransferase 4 from Trypanosoma brucei brucei (strain 927/4 GUTat10.1).